A 619-amino-acid polypeptide reads, in one-letter code: Telomere repeat-binding protein 3 (619 aa).

Positions 324–403 (VKLSIKSFRI…LDNLGFTLEP (80 aa)) constitute a Ubiquitin-like domain. An HTH myb-type domain is found at 504–563 (AQRRTRRPFSVTEVEALVQAVEELGTGRWRDVKLRAFEDADHRTYVDLKDKWKTLVHTAS). The H-T-H motif DNA-binding region spans 532–559 (WRDVKLRAFEDADHRTYVDLKDKWKTLV). The tract at residues 593 to 619 (QGKHQARGASKDPDMNRGGAFESGVSV) is disordered.

As to quaternary structure, homodimer and heterodimer with TRP1. As to expression, expressed ubiquitously. Highest expression in flowers and roots.

Its subcellular location is the nucleus. In terms of biological role, binds specifically to the plant telomeric double-stranded DNA sequences. At least 2 repeats of telomeric sequences are required for binding. Induces DNA bending. The protein is Telomere repeat-binding protein 3 (TRP3) of Arabidopsis thaliana (Mouse-ear cress).